The following is a 499-amino-acid chain: Probable alpha-L-arabinofuranosidase B (499 aa).

The N-terminal stretch at 1–17 (MFSRRNLLALGLAATVS) is a signal peptide. The catalytic stretch occupies residues 18-335 (AGPCDIYEAG…ENIVAAKYVV (318 aa)). 3 cysteine pairs are disulfide-bonded: cysteine 21-cysteine 31, cysteine 81-cysteine 86, and cysteine 176-cysteine 177. Residue asparagine 83 is glycosylated (N-linked (GlcNAc...) asparagine). Asparagine 202 carries N-linked (GlcNAc...) asparagine glycosylation. Residue aspartate 219 coordinates substrate. Catalysis depends on glutamate 221, which acts as the Nucleophile. Positions 222, 223, 296, 416, 418, 419, 435, 463, 465, 468, and 488 each coordinate substrate. The interval 336-499 (GSLVSGPSFT…SFEIETAFAS (164 aa)) is ABD. A disulfide bridge links cysteine 401 with cysteine 439.

Belongs to the glycosyl hydrolase 54 family.

The protein resides in the secreted. It carries out the reaction Hydrolysis of terminal non-reducing alpha-L-arabinofuranoside residues in alpha-L-arabinosides.. Its pathway is glycan metabolism; L-arabinan degradation. In terms of biological role, alpha-L-arabinofuranosidase involved in the degradation of arabinoxylan, a major component of plant hemicellulose. Able to hydrolyze 1,5-, 1,3- and 1,2-alpha-linkages not only in L-arabinofuranosyl oligosaccharides, but also in polysaccharides containing terminal non-reducing L-arabinofuranoses in side chains, like L-arabinan, arabinogalactan and arabinoxylan. This chain is Probable alpha-L-arabinofuranosidase B (abfB), found in Aspergillus awamori (Black koji mold).